Consider the following 221-residue polypeptide: F-box protein At1g55000 (221 aa).

An F-box domain is found at 7 to 46 (DTLIIIFQKLTVADLARASCVCKVWNSVATEDDLVVSAFT). Residues 74-118 (ISHRICRGDSVTSLAVKYAVQVMDIKRLNNMMSDHGIYSRDRLLI) enclose the LysM domain.

As to quaternary structure, part of a SCF (ASK-cullin-F-box) protein ligase complex. Interacts with SKP1A/ASK1, SKP1B/ASK2, ASK4, ASK11 and ASK13.

Its pathway is protein modification; protein ubiquitination. Functionally, component of SCF(ASK-cullin-F-box) E3 ubiquitin ligase complexes, which may mediate the ubiquitination and subsequent proteasomal degradation of target proteins. The sequence is that of F-box protein At1g55000 from Arabidopsis thaliana (Mouse-ear cress).